We begin with the raw amino-acid sequence, 361 residues long: Fructose-bisphosphate aldolase (361 aa).

At Thr2 the chain carries N-acetylthreonine. Substrate contacts are provided by Arg56 and Lys147. Glu188 functions as the Proton acceptor in the catalytic mechanism. Lys230 (schiff-base intermediate with dihydroxyacetone-P) is an active-site residue.

Belongs to the class I fructose-bisphosphate aldolase family. Homotetramer. As to expression, mainly expressed in the heads and partly in the thoraxes of adult flies. Expressed in all adult tissues. The Alpha-beta mRNA shows strong expression in the abdomens of adults. In terms of tissue distribution, mainly expressed in adult abdominal regions and is also expressed in lesser amounts in other parts of the body. The Beta-gamma mRNA is expressed in adult heads.

It catalyses the reaction beta-D-fructose 1,6-bisphosphate = D-glyceraldehyde 3-phosphate + dihydroxyacetone phosphate. The protein operates within carbohydrate degradation; glycolysis; D-glyceraldehyde 3-phosphate and glycerone phosphate from D-glucose: step 4/4. Functionally, enzyme of the glycolytic pathway. Glycolysis is essential in glial cells but not in neurons; neurons rely on the citric acid cycle for their energy needs, and on lactate and alanine secreted into the hemolymph by glial cells to fuel it. May take part in developmental stage-specific or tissue -specific sugar-phosphate metabolisms. Protein acts on two substrates fructose 1,6-bisphosphate and fructose 1-phosphate (like other class I aldolases). The sequence is that of Fructose-bisphosphate aldolase from Drosophila melanogaster (Fruit fly).